The sequence spans 294 residues: N-acetylmuramic acid 6-phosphate etherase (294 aa).

The SIS domain occupies 54 to 217 (TIHSFKSNGR…STASMIGVGK (164 aa)). Glutamate 82 functions as the Proton donor in the catalytic mechanism. Residue glutamate 113 is part of the active site.

This sequence belongs to the GCKR-like family. MurNAc-6-P etherase subfamily. In terms of assembly, homodimer.

It catalyses the reaction N-acetyl-D-muramate 6-phosphate + H2O = N-acetyl-D-glucosamine 6-phosphate + (R)-lactate. Its pathway is amino-sugar metabolism; N-acetylmuramate degradation. Its function is as follows. Specifically catalyzes the cleavage of the D-lactyl ether substituent of MurNAc 6-phosphate, producing GlcNAc 6-phosphate and D-lactate. The polypeptide is N-acetylmuramic acid 6-phosphate etherase (Oceanobacillus iheyensis (strain DSM 14371 / CIP 107618 / JCM 11309 / KCTC 3954 / HTE831)).